A 138-amino-acid chain; its full sequence is Small ribosomal subunit protein uS12 (138 aa).

The span at 1-22 (MPTINQLVRQGRKSISTKSDSP) shows a compositional bias: polar residues. Residues 1–45 (MPTINQLVRQGRKSISTKSDSPALNFGYNSKKKSLTNNPAPQKRG) are disordered. Aspartate 102 carries the 3-methylthioaspartic acid modification.

This sequence belongs to the universal ribosomal protein uS12 family. As to quaternary structure, part of the 30S ribosomal subunit. Contacts proteins S8 and S17. May interact with IF1 in the 30S initiation complex.

Its function is as follows. With S4 and S5 plays an important role in translational accuracy. Interacts with and stabilizes bases of the 16S rRNA that are involved in tRNA selection in the A site and with the mRNA backbone. Located at the interface of the 30S and 50S subunits, it traverses the body of the 30S subunit contacting proteins on the other side and probably holding the rRNA structure together. The combined cluster of proteins S8, S12 and S17 appears to hold together the shoulder and platform of the 30S subunit. This chain is Small ribosomal subunit protein uS12, found in Lacticaseibacillus paracasei (strain ATCC 334 / BCRC 17002 / CCUG 31169 / CIP 107868 / KCTC 3260 / NRRL B-441) (Lactobacillus paracasei).